The following is a 386-amino-acid chain: MPGLTSIRTSEGKIEIVNQLLLPHTTEFIEISTIEQAHDAIKSMKIRGAPAIASLAALTIASHLSRALQADPSPDFLTSPLTLQEHVEGHLSYINTARPTAVNLGAATRRLSNILEQSVRAGKDARAIAEDLIREGKEIDEEDVGRNKQMSRHGAEWLLEQWAAKGLSGSNLNVMTVCNTGSLATSGYGTALGLITHLHETGRLQRAFYTQSTPYHQGSRLTAFELQTLNIPSTMLCDSMVGSLFQSHGIHAVAVGADRITRDGDTANKVGTYNAAVLAARHKIPFIVVAPVSTVDLDIADGSSIPIEHRPALEACVVRGALYPVRTDAEGLKEQATVMITPEGLDGVYNPSFDVTPAELITAIVTEKGVAVKRDGESTFDLTSIV.

Asp-258 functions as the Proton donor in the catalytic mechanism.

The protein belongs to the eIF-2B alpha/beta/delta subunits family. MtnA subfamily.

Its subcellular location is the cytoplasm. It is found in the nucleus. It catalyses the reaction 5-(methylsulfanyl)-alpha-D-ribose 1-phosphate = 5-(methylsulfanyl)-D-ribulose 1-phosphate. It functions in the pathway amino-acid biosynthesis; L-methionine biosynthesis via salvage pathway; L-methionine from S-methyl-5-thio-alpha-D-ribose 1-phosphate: step 1/6. In terms of biological role, catalyzes the interconversion of methylthioribose-1-phosphate (MTR-1-P) into methylthioribulose-1-phosphate (MTRu-1-P). In Postia placenta (strain ATCC 44394 / Madison 698-R) (Brown rot fungus), this protein is Methylthioribose-1-phosphate isomerase.